Here is a 724-residue protein sequence, read N- to C-terminus: Probable serine/threonine-protein kinase KKQ8 (724 aa).

Disordered stretches follow at residues 1–81 (MVMQ…RQRS) and 93–188 (HPFR…KDIL). Residue Ser-19 is modified to Phosphoserine. Low complexity predominate over residues 45-54 (PYRSSSTSPK). A compositionally biased stretch (polar residues) spans 95–106 (FRQTGSGASNSP). Low complexity predominate over residues 143–162 (RSSSVSSCDSSNGTTSSSDS). Ser-232, Ser-238, and Ser-241 each carry phosphoserine. Residues 329–355 (SQTNHEKRTGQSPNDSNRSSPTQGRED) form a disordered region. A compositionally biased stretch (polar residues) spans 338–351 (GQSPNDSNRSSPTQ). One can recognise a Protein kinase domain in the interval 412–712 (GHPVGLVGAG…VGKLLDMQWM (301 aa)). ATP-binding positions include 418–426 (VGAGAYGEV) and Lys-455. Asp-563 (proton acceptor) is an active-site residue.

It belongs to the protein kinase superfamily. CAMK Ser/Thr protein kinase family. NPR/HAL subfamily. HAL5 sub-subfamily.

Its subcellular location is the cytoplasm. It carries out the reaction L-seryl-[protein] + ATP = O-phospho-L-seryl-[protein] + ADP + H(+). The catalysed reaction is L-threonyl-[protein] + ATP = O-phospho-L-threonyl-[protein] + ADP + H(+). The polypeptide is Probable serine/threonine-protein kinase KKQ8 (KKQ8) (Saccharomyces cerevisiae (strain ATCC 204508 / S288c) (Baker's yeast)).